Reading from the N-terminus, the 218-residue chain is ATP phosphoribosyltransferase (218 aa).

The protein belongs to the ATP phosphoribosyltransferase family. Short subfamily. As to quaternary structure, heteromultimer composed of HisG and HisZ subunits.

Its subcellular location is the cytoplasm. It catalyses the reaction 1-(5-phospho-beta-D-ribosyl)-ATP + diphosphate = 5-phospho-alpha-D-ribose 1-diphosphate + ATP. The protein operates within amino-acid biosynthesis; L-histidine biosynthesis; L-histidine from 5-phospho-alpha-D-ribose 1-diphosphate: step 1/9. In terms of biological role, catalyzes the condensation of ATP and 5-phosphoribose 1-diphosphate to form N'-(5'-phosphoribosyl)-ATP (PR-ATP). Has a crucial role in the pathway because the rate of histidine biosynthesis seems to be controlled primarily by regulation of HisG enzymatic activity. The polypeptide is ATP phosphoribosyltransferase (Lactiplantibacillus plantarum (strain ATCC BAA-793 / NCIMB 8826 / WCFS1) (Lactobacillus plantarum)).